We begin with the raw amino-acid sequence, 359 residues long: Putative ankyrin repeat protein R190 (359 aa).

7 ANK repeats span residues 72-103 (RLME…DFRC), 105-133 (DCVI…DLNR), 142-173 (DEII…SISI), 203-234 (LGNL…DINN), 236-260 (HEYS…YGLI), 261-287 (IHDD…IGHK), and 288-317 (PSKQ…DLSD).

This is Putative ankyrin repeat protein R190 from Acanthamoeba polyphaga (Amoeba).